Here is a 59-residue protein sequence, read N- to C-terminus: Large ribosomal subunit protein bL32 (59 aa).

The disordered stretch occupies residues 35 to 59 (EAHLRHHISPNGYYRGRKVVKTKND). Positions 49–59 (RGRKVVKTKND) are enriched in basic residues.

Belongs to the bacterial ribosomal protein bL32 family.

The chain is Large ribosomal subunit protein bL32 from Polynucleobacter asymbioticus (strain DSM 18221 / CIP 109841 / QLW-P1DMWA-1) (Polynucleobacter necessarius subsp. asymbioticus).